We begin with the raw amino-acid sequence, 190 residues long: UPF0301 protein Pden_0436 (190 aa).

Belongs to the UPF0301 (AlgH) family.

The polypeptide is UPF0301 protein Pden_0436 (Paracoccus denitrificans (strain Pd 1222)).